Here is a 577-residue protein sequence, read N- to C-terminus: Arginine--tRNA ligase (577 aa).

The short motif at 122 to 132 (PNVAKEMHVGH) is the 'HIGH' region element.

Belongs to the class-I aminoacyl-tRNA synthetase family. Monomer.

The protein resides in the cytoplasm. The enzyme catalyses tRNA(Arg) + L-arginine + ATP = L-arginyl-tRNA(Arg) + AMP + diphosphate. This is Arginine--tRNA ligase from Salmonella agona (strain SL483).